The sequence spans 80 residues: uncharacterized protein (80 aa).

An N-terminal signal peptide occupies residues 1–20 (MVAADHRALGSNKSYPASQT). The interval 1 to 21 (MVAADHRALGSNKSYPASQTA) is disordered. Polar residues predominate over residues 11–21 (SNKSYPASQTA).

This is an uncharacterized protein from Mycobacterium tuberculosis (strain CDC 1551 / Oshkosh).